Reading from the N-terminus, the 129-residue chain is MKYFVVALALVAAFACIAESKPAESEHELAEVEEENELADLEDAVWLEHLADLSDLEEARGFFGNTWKKIKGKADKIMLKKAVKIMVKKEGISKEEAQAKVDAMSKKQIRLYVLKHYGKKALQKVSEKL.

The signal sequence occupies residues 1–20; sequence MKYFVVALALVAAFACIAES. Positions 21–60 are excised as a propeptide; the sequence is KPAESEHELAEVEEENELADLEDAVWLEHLADLSDLEEAR.

This sequence belongs to the cationic peptide 06 (cytoinsectotoxin) family. As to expression, expressed by the venom gland.

It localises to the secreted. Insecticidal, cytolytic and antimicrobial peptide. Forms voltage-dependent, ion-permeable channels in membranes. At high concentration causes cell membrane lysis. The chain is M-zodatoxin-Lt8k (cit 1-10) from Lachesana tarabaevi (Spider).